A 268-amino-acid polypeptide reads, in one-letter code: Tryptophan synthase alpha chain (268 aa).

Catalysis depends on proton acceptor residues glutamate 49 and aspartate 60.

The protein belongs to the TrpA family. Tetramer of two alpha and two beta chains.

The catalysed reaction is (1S,2R)-1-C-(indol-3-yl)glycerol 3-phosphate + L-serine = D-glyceraldehyde 3-phosphate + L-tryptophan + H2O. It functions in the pathway amino-acid biosynthesis; L-tryptophan biosynthesis; L-tryptophan from chorismate: step 5/5. In terms of biological role, the alpha subunit is responsible for the aldol cleavage of indoleglycerol phosphate to indole and glyceraldehyde 3-phosphate. The chain is Tryptophan synthase alpha chain from Escherichia fergusonii (strain ATCC 35469 / DSM 13698 / CCUG 18766 / IAM 14443 / JCM 21226 / LMG 7866 / NBRC 102419 / NCTC 12128 / CDC 0568-73).